A 188-amino-acid polypeptide reads, in one-letter code: Elongation factor P (188 aa).

Lys-34 is modified (N6-(3,6-diaminohexanoyl)-5-hydroxylysine).

It belongs to the elongation factor P family. In terms of processing, may be beta-lysylated on the epsilon-amino group of Lys-34 by the combined action of EpmA and EpmB, and then hydroxylated on the C5 position of the same residue by EpmC (if this protein is present). Lysylation is critical for the stimulatory effect of EF-P on peptide-bond formation. The lysylation moiety may extend toward the peptidyltransferase center and stabilize the terminal 3-CCA end of the tRNA. Hydroxylation of the C5 position on Lys-34 may allow additional potential stabilizing hydrogen-bond interactions with the P-tRNA.

It localises to the cytoplasm. It participates in protein biosynthesis; polypeptide chain elongation. Its function is as follows. Involved in peptide bond synthesis. Alleviates ribosome stalling that occurs when 3 or more consecutive Pro residues or the sequence PPG is present in a protein, possibly by augmenting the peptidyl transferase activity of the ribosome. Modification of Lys-34 is required for alleviation. The polypeptide is Elongation factor P (Vibrio atlanticus (strain LGP32) (Vibrio splendidus (strain Mel32))).